The sequence spans 444 residues: Glucoside xylosyltransferase 2 (444 aa).

The Cytoplasmic segment spans residues 1–4 (MKLR). A helical; Signal-anchor for type II membrane protein membrane pass occupies residues 5 to 25 (SKAAALLLLALAVLLLALLSL). The Lumenal segment spans residues 26–444 (RARRDPEPPG…IIHMGPNPMS (419 aa)). Residues 31–101 (PEPPGFPARP…LARRPGETRS (71 aa)) form a disordered region. Over residues 68-83 (RSPRRQPPRLRPRAGR) the composition is skewed to basic residues. The segment covering 87 to 101 (ASREKLARRPGETRS) has biased composition (basic and acidic residues). Residue N275 is glycosylated (N-linked (GlcNAc...) asparagine).

Belongs to the glycosyltransferase 8 family.

It localises to the membrane. It catalyses the reaction 3-O-(beta-D-glucosyl)-L-seryl-[EGF-like domain protein] + UDP-alpha-D-xylose = 3-O-[alpha-D-xylosyl-(1-&gt;3)-beta-D-glucosyl]-L-seryl-[EGF-like domain protein] + UDP + H(+). Glycosyltransferase which elongates the O-linked glucose attached to EGF-like repeats in the extracellular domain of Notch proteins by catalyzing the addition of xylose. The sequence is that of Glucoside xylosyltransferase 2 (Gxylt2) from Mus musculus (Mouse).